A 167-amino-acid polypeptide reads, in one-letter code: Ribosome maturation factor RimM (167 aa).

Residues Asp92–Leu166 enclose the PRC barrel domain.

This sequence belongs to the RimM family. In terms of assembly, binds ribosomal protein uS19.

It localises to the cytoplasm. Its function is as follows. An accessory protein needed during the final step in the assembly of 30S ribosomal subunit, possibly for assembly of the head region. Essential for efficient processing of 16S rRNA. May be needed both before and after RbfA during the maturation of 16S rRNA. It has affinity for free ribosomal 30S subunits but not for 70S ribosomes. The sequence is that of Ribosome maturation factor RimM from Ruegeria pomeroyi (strain ATCC 700808 / DSM 15171 / DSS-3) (Silicibacter pomeroyi).